The chain runs to 1578 residues: Bromodomain-containing protein DDB_G0270170 (1578 aa).

Residues 1-12 (MSLEQQDETVVE) show a composition bias toward acidic residues. 4 disordered regions span residues 1 to 39 (MSLEQQDETVVEEETKTSFETNNSTANNTNNNTDNTYKE), 108 to 127 (NNNNGDENNKDIHDSSNNTE), 151 to 285 (HYSD…AKEL), and 319 to 454 (NENI…TTQT). The span at 18–35 (SFETNNSTANNTNNNTDN) shows a compositional bias: low complexity. Residues 152 to 163 (YSDDESSKEKQD) show a composition bias toward basic and acidic residues. 2 stretches are compositionally biased toward low complexity: residues 164 to 185 (NINSNNNNNKNKNEQIINSENI) and 197 to 231 (TTPSDTPPTLTNNTSSTTTTTTTNNTTTAATTTTN). Polar residues-rich tracts occupy residues 319–332 (NENIFSSSRKSTTK) and 340–351 (TASTTNTPIITA). Residues 352–383 (QQNTTPLSPTQTTTTTTTPTTTTAQQNTPAQT) are compositionally biased toward low complexity. Over residues 384-395 (ESKPPTTISINI) the composition is skewed to polar residues. Composition is skewed to low complexity over residues 396-407 (KGSKSPKTTGGK) and 417-433 (VVISQPVVPSTPVVATT). The span at 443-454 (STANNNSETTQT) shows a compositional bias: polar residues. Residues 479 to 506 (SDSATIQQLQQSISMLEDKIRLISSNNK) adopt a coiled-coil conformation. Disordered regions lie at residues 543 to 565 (FTKSSTLAPPSSERKYSNLYSDD) and 580 to 730 (IPIP…RMGK). Low complexity-rich tracts occupy residues 604 to 653 (NTST…PPQQ) and 660 to 686 (TQQENTSSTTTTTTTTTTTTNTEDTTT). Residues 735–841 (VVLTPVFKRC…DVFEKGFPKV (107 aa)) enclose the Bromo domain. The stretch at 851–903 (KNVDQEKIEKLSNDLKNVTKELEKFKKDDSNSINNNNNNNNNYNNNNNNNNNN) forms a coiled coil. Disordered stretches follow at residues 874-969 (KFKK…KVTT), 1039-1167 (HALP…NNNN), 1184-1452 (SIPE…TDSA), and 1480-1544 (EREE…KGNM). 3 stretches are compositionally biased toward low complexity: residues 881 to 911 (NSINNNNNNNNNYNNNNNNNNNNSSSSSSRS), 918 to 961 (SSGS…SSNN), and 1047 to 1061 (SSTHSSHSSSHDSSS). The NET domain maps to 957-1039 (SSSNNKKYPK…QYKNGEIPQH (83 aa)). The segment covering 1064 to 1077 (REIEKLQKQLDRLG) has biased composition (basic and acidic residues). The span at 1092 to 1107 (HSKRISKPISKARGRK) shows a compositional bias: basic residues. The segment covering 1112 to 1167 (SSSNLNNSSNNINNNNNNINNYNNNNNYNNNNNNNLNNNNNNNINSNLNNNLNNNN) has biased composition (low complexity). Positions 1113 to 1150 (SSNLNNSSNNINNNNNNINNYNNNNNYNNNNNNNLNNN) form a coiled coil. The span at 1192–1204 (TDISESSDSESDS) shows a compositional bias: acidic residues. 2 stretches are compositionally biased toward low complexity: residues 1205-1218 (ESGSSDSSSSYSDS) and 1231-1334 (YNNS…SLTN). Residues 1280-1308 (NSNNNNSNNNNNNVNNNNNNHNNNNHNNN) are a coiled coil. Polar residues predominate over residues 1356–1369 (SVASWSFDPTNNKE). Residues 1370–1386 (SSSSSSTSSTSSTSNTT) are compositionally biased toward low complexity. The segment covering 1387–1399 (LTPIIQQSSLTHA) has biased composition (polar residues). Low complexity-rich tracts occupy residues 1400 to 1424 (SSPISSSTFVSFSSSSSTPPTNNLS) and 1432 to 1451 (NSPSINSPSSPSANNNNTDS). Positions 1462-1544 (TLKQKEKERV…EKLNNSKGNM (83 aa)) form a coiled coil. Residues 1480 to 1538 (EREEKEEELKKEEEKKRIEMEEIKRLAKEKEEREAEETRKQIESERAAAREAREKEKLN) are compositionally biased toward basic and acidic residues.

The sequence is that of Bromodomain-containing protein DDB_G0270170 from Dictyostelium discoideum (Social amoeba).